A 312-amino-acid chain; its full sequence is Olfactory receptor 7D2 (312 aa).

The Extracellular portion of the chain corresponds to 1–25 (MEAGNQTGFLEFILLGLSEDPELQP). N-linked (GlcNAc...) asparagine glycosylation occurs at asparagine 5. A helical transmembrane segment spans residues 26–46 (FIFGLFLSMYLVTVLGNLLII). At 47–54 (LAISSDSH) the chain is on the cytoplasmic side. A helical transmembrane segment spans residues 55–75 (LHTPMYFFLSNLSWVDICFST). Topologically, residues 76–99 (CIVPKMLVNIQTENKAISYMDCLT) are extracellular. A disulfide bridge links cysteine 97 with cysteine 189. A helical transmembrane segment spans residues 100–120 (QVYFSMFFPILDTLLLTVMAY). Over 121 to 139 (DRFVAVCHPLHYMIIMNPH) the chain is Cytoplasmic. Residues 140 to 160 (LCGLLVFVTWLIGVMTSLLHI) traverse the membrane as a helical segment. The Extracellular segment spans residues 161–197 (SLMMHLIFCKDFEIPHFFCELTYILQLACSDTFLNST). A helical membrane pass occupies residues 198 to 217 (LIYFMTGVLGVFPLLGIIFS). The Cytoplasmic portion of the chain corresponds to 218–237 (YSRIASSIRKMSSSGGKQKA). A helical membrane pass occupies residues 238–258 (LSTCGSHLSVVSLFYGTGIGV). Over 259-271 (HFTSAVTHSSQKI) the chain is Extracellular. The chain crosses the membrane as a helical span at residues 272 to 292 (SVASVMYTVVTPMLNPFIYSL). Residues 293–312 (RNKDVKGALGSLLSRAASCL) lie on the Cytoplasmic side of the membrane.

The protein belongs to the G-protein coupled receptor 1 family.

It localises to the cell membrane. In terms of biological role, odorant receptor. The chain is Olfactory receptor 7D2 (OR7D2) from Homo sapiens (Human).